Consider the following 380-residue polypeptide: Succinyl-diaminopimelate desuccinylase (380 aa).

Residue H69 participates in Zn(2+) binding. Residue D71 is part of the active site. D102 lines the Zn(2+) pocket. The active-site Proton acceptor is the E135. E136, E164, and H353 together coordinate Zn(2+).

It belongs to the peptidase M20A family. DapE subfamily. As to quaternary structure, homodimer. Zn(2+) is required as a cofactor. Co(2+) serves as cofactor.

It carries out the reaction N-succinyl-(2S,6S)-2,6-diaminopimelate + H2O = (2S,6S)-2,6-diaminopimelate + succinate. Its pathway is amino-acid biosynthesis; L-lysine biosynthesis via DAP pathway; LL-2,6-diaminopimelate from (S)-tetrahydrodipicolinate (succinylase route): step 3/3. Catalyzes the hydrolysis of N-succinyl-L,L-diaminopimelic acid (SDAP), forming succinate and LL-2,6-diaminopimelate (DAP), an intermediate involved in the bacterial biosynthesis of lysine and meso-diaminopimelic acid, an essential component of bacterial cell walls. The chain is Succinyl-diaminopimelate desuccinylase from Cereibacter sphaeroides (strain ATCC 17023 / DSM 158 / JCM 6121 / CCUG 31486 / LMG 2827 / NBRC 12203 / NCIMB 8253 / ATH 2.4.1.) (Rhodobacter sphaeroides).